The chain runs to 401 residues: Chalcone synthase 3 (401 aa).

The active site involves C168.

The protein belongs to the thiolase-like superfamily. Chalcone/stilbene synthases family.

It carries out the reaction (E)-4-coumaroyl-CoA + 3 malonyl-CoA + 3 H(+) = 2',4,4',6'-tetrahydroxychalcone + 3 CO2 + 4 CoA. It functions in the pathway secondary metabolite biosynthesis; flavonoid biosynthesis. The primary product of this enzyme is 4,2',4',6'-tetrahydroxychalcone (also termed naringenin-chalcone or chalcone) which can under specific conditions spontaneously isomerize into naringenin. The protein is Chalcone synthase 3 (CHS3) of Sorghum bicolor (Sorghum).